The sequence spans 87 residues: Insulin-related peptide 1 (87 aa).

Residues 1–19 form the signal peptide; sequence MKSFMVFVLIFACFSCYYA. The propeptide occupies 20–44; it reads QESTNFYCGRTLSRALAVLCYGAES. Arg-64 carries the post-translational modification Arginine amide. Residues 68–87 constitute a propeptide that is removed on maturation; it reads GPVDECCEKACSIQELMTYC.

Belongs to the insulin family. DAGWWIPQHGHHALAGVR-amide: Expressed in corpora cardiaca (CC), corpora allata (CA), antennal lobe (AL) and gnathal ganglion (GNG) (at protein level). Expression in CC and CA detected in most animals, in AL and GNG in few animals (at protein level).

The protein localises to the secreted. The sequence is that of Insulin-related peptide 1 from Agrotis ipsilon (Black cutworm moth).